A 201-amino-acid chain; its full sequence is MQIYVSGIHTDVGKTHFSAAFCANFNYDYFKLIQAGTPTDSEFIAKFSPKTKIFKEGIFLQTPASPHLGKIKEKLDYKALDIILPKSKNLLIELAGGLFSPMDENYTMIDFVNIFKHPTILVAKYYLGSINHILLSIEALKQRNINLLALVMMGKKDILQDDFIKNYAKIPIINLDFFDENSILNKDFKEQMQEILQLKIP.

11–16 contacts ATP; the sequence is DVGKTH. T15 is a binding site for Mg(2+). K31 is a catalytic residue. Residues D40 and 93 to 96 each bind ATP; that span reads ELAG. D40 and E93 together coordinate Mg(2+).

It belongs to the dethiobiotin synthetase family. In terms of assembly, homodimer. The cofactor is Mg(2+).

It localises to the cytoplasm. It carries out the reaction (7R,8S)-7,8-diammoniononanoate + CO2 + ATP = (4R,5S)-dethiobiotin + ADP + phosphate + 3 H(+). Its pathway is cofactor biosynthesis; biotin biosynthesis; biotin from 7,8-diaminononanoate: step 1/2. Its function is as follows. Catalyzes a mechanistically unusual reaction, the ATP-dependent insertion of CO2 between the N7 and N8 nitrogen atoms of 7,8-diaminopelargonic acid (DAPA, also called 7,8-diammoniononanoate) to form a ureido ring. This chain is ATP-dependent dethiobiotin synthetase BioD, found in Campylobacter jejuni subsp. jejuni serotype O:6 (strain 81116 / NCTC 11828).